We begin with the raw amino-acid sequence, 84 residues long: Small ribosomal subunit protein bS18 (84 aa).

This sequence belongs to the bacterial ribosomal protein bS18 family. In terms of assembly, part of the 30S ribosomal subunit. Forms a tight heterodimer with protein bS6.

Its function is as follows. Binds as a heterodimer with protein bS6 to the central domain of the 16S rRNA, where it helps stabilize the platform of the 30S subunit. The polypeptide is Small ribosomal subunit protein bS18 (Polynucleobacter necessarius subsp. necessarius (strain STIR1)).